Reading from the N-terminus, the 370-residue chain is tRNA-specific 2-thiouridylase MnmA (370 aa).

Residues 11–18 and methionine 37 contribute to the ATP site; that span reads GMSGGVDS. An interaction with target base in tRNA region spans residues 97 to 99; that stretch reads NPD. Catalysis depends on cysteine 102, which acts as the Nucleophile. Cysteine 102 and cysteine 199 form a disulfide bridge. Glycine 126 provides a ligand contact to ATP. The interval 149–151 is interaction with tRNA; it reads KDQ. Cysteine 199 (cysteine persulfide intermediate) is an active-site residue. The tract at residues 307 to 308 is interaction with tRNA; sequence RY.

The protein belongs to the MnmA/TRMU family.

It is found in the cytoplasm. It carries out the reaction S-sulfanyl-L-cysteinyl-[protein] + uridine(34) in tRNA + AH2 + ATP = 2-thiouridine(34) in tRNA + L-cysteinyl-[protein] + A + AMP + diphosphate + H(+). Catalyzes the 2-thiolation of uridine at the wobble position (U34) of tRNA, leading to the formation of s(2)U34. The polypeptide is tRNA-specific 2-thiouridylase MnmA (Staphylococcus carnosus (strain TM300)).